We begin with the raw amino-acid sequence, 117 residues long: Cliotide T9 (117 aa).

Positions M1–A25 are cleaved as a signal peptide. The segment at residues G26–N55 is a cross-link (cyclopeptide (Gly-Asn)). 3 disulfide bridges follow: C29/C45, C33/C47, and C38/C52. Residues H56–P117 constitute a propeptide, removed in mature form.

Contains 3 disulfide bonds. In terms of processing, this is a cyclic peptide. Expressed in seed but not in root, nodule, flower, stem, shoot, leaf and pod (at protein level).

Its function is as follows. Probably participates in a plant defense mechanism. This is Cliotide T9 from Clitoria ternatea (Butterfly pea).